Reading from the N-terminus, the 307-residue chain is MRKIILCSPRGFCAGVIRAIQTVEVALEKWGRPIYVKHEIVHNRHVVDKLREKGAIFIEDLQEVPRNSRVIFSAHGVPPSVREEAEERGLIAIDATCGLVTKVHSAVKMYAKKGYHIILIGKRKHVEIIGIRGEAPDQITVVENIAEVEALPFSAQDPLFYVTQTTLSMDDAADIVAALKARYPRIFTLPSSSICYATQNRQGALRNILPQVDFVYVIGDTQSSNSNRLREVAERRGVTARLVNHPDEVTEEILQYSGNIGITAGASTPEDVVQACLMKLQELIPDLSIEMDLFVEEDTVFQLPKEL.

Residue C13 coordinates [4Fe-4S] cluster. H42 and H75 together coordinate (2E)-4-hydroxy-3-methylbut-2-enyl diphosphate. Dimethylallyl diphosphate contacts are provided by H42 and H75. Isopentenyl diphosphate is bound by residues H42 and H75. C97 provides a ligand contact to [4Fe-4S] cluster. Residue H125 participates in (2E)-4-hydroxy-3-methylbut-2-enyl diphosphate binding. H125 lines the dimethylallyl diphosphate pocket. H125 contacts isopentenyl diphosphate. Catalysis depends on E127, which acts as the Proton donor. T165 serves as a coordination point for (2E)-4-hydroxy-3-methylbut-2-enyl diphosphate. C195 contacts [4Fe-4S] cluster. 4 residues coordinate (2E)-4-hydroxy-3-methylbut-2-enyl diphosphate: S223, S224, N225, and S267. The dimethylallyl diphosphate site is built by S223, S224, N225, and S267. Residues S223, S224, N225, and S267 each contribute to the isopentenyl diphosphate site.

The protein belongs to the IspH family. [4Fe-4S] cluster serves as cofactor.

The enzyme catalyses isopentenyl diphosphate + 2 oxidized [2Fe-2S]-[ferredoxin] + H2O = (2E)-4-hydroxy-3-methylbut-2-enyl diphosphate + 2 reduced [2Fe-2S]-[ferredoxin] + 2 H(+). The catalysed reaction is dimethylallyl diphosphate + 2 oxidized [2Fe-2S]-[ferredoxin] + H2O = (2E)-4-hydroxy-3-methylbut-2-enyl diphosphate + 2 reduced [2Fe-2S]-[ferredoxin] + 2 H(+). Its pathway is isoprenoid biosynthesis; dimethylallyl diphosphate biosynthesis; dimethylallyl diphosphate from (2E)-4-hydroxy-3-methylbutenyl diphosphate: step 1/1. It functions in the pathway isoprenoid biosynthesis; isopentenyl diphosphate biosynthesis via DXP pathway; isopentenyl diphosphate from 1-deoxy-D-xylulose 5-phosphate: step 6/6. Its function is as follows. Catalyzes the conversion of 1-hydroxy-2-methyl-2-(E)-butenyl 4-diphosphate (HMBPP) into a mixture of isopentenyl diphosphate (IPP) and dimethylallyl diphosphate (DMAPP). Acts in the terminal step of the DOXP/MEP pathway for isoprenoid precursor biosynthesis. The protein is 4-hydroxy-3-methylbut-2-enyl diphosphate reductase of Chlamydia trachomatis serovar D (strain ATCC VR-885 / DSM 19411 / UW-3/Cx).